The sequence spans 223 residues: UPF0502 protein Sbal223_2520 (223 aa).

It belongs to the UPF0502 family.

The chain is UPF0502 protein Sbal223_2520 from Shewanella baltica (strain OS223).